We begin with the raw amino-acid sequence, 230 residues long: Small ribosomal subunit protein uS7m (230 aa).

This sequence belongs to the universal ribosomal protein uS7 family. As to quaternary structure, part of the small ribosomal subunit.

It localises to the mitochondrion. In terms of biological role, one of the primary rRNA binding proteins, it binds directly to 18S rRNA where it nucleates assembly of the head domain of the small subunit. The sequence is that of Small ribosomal subunit protein uS7m (RPS7) from Marchantia polymorpha (Common liverwort).